The chain runs to 431 residues: Phosphoribosylamine--glycine ligase (431 aa).

Positions 108–315 constitute an ATP-grasp domain; the sequence is KDFLARHKIP…LVLLIEAALA (208 aa). 134–195 lines the ATP pocket; the sequence is LREKGAPIVI…EEFLDGEEAS (62 aa). Mg(2+) contacts are provided by glutamate 285 and asparagine 287.

It belongs to the GARS family. Requires Mg(2+) as cofactor. The cofactor is Mn(2+).

It carries out the reaction 5-phospho-beta-D-ribosylamine + glycine + ATP = N(1)-(5-phospho-beta-D-ribosyl)glycinamide + ADP + phosphate + H(+). Its pathway is purine metabolism; IMP biosynthesis via de novo pathway; N(1)-(5-phospho-D-ribosyl)glycinamide from 5-phospho-alpha-D-ribose 1-diphosphate: step 2/2. The protein is Phosphoribosylamine--glycine ligase of Pseudomonas syringae pv. tomato (strain ATCC BAA-871 / DC3000).